The sequence spans 222 residues: Uridine diphosphate glucose pyrophosphatase NUDT14 (222 aa).

The 169-residue stretch at 38–206 (KTHDSVTILM…DVPKTLGVIF (169 aa)) folds into the Nudix hydrolase domain. Residues 111–129 (PGLSLEEVACKEAWEECGY) carry the Nudix box motif.

This sequence belongs to the Nudix hydrolase family. In terms of assembly, homodimer. Requires Mg(2+) as cofactor.

It is found in the cytoplasm. The catalysed reaction is UDP-sugar + H2O = UMP + alpha-D-aldose 1-phosphate.. Functionally, hydrolyzes UDP-glucose to glucose 1-phosphate and UMP and ADP-ribose to ribose 5-phosphate and AMP. The physiological substrate is probably UDP-glucose. Poor activity on other substrates such as ADP-glucose, CDP-glucose, GDP-glucose and GDP-mannose. In Bos taurus (Bovine), this protein is Uridine diphosphate glucose pyrophosphatase NUDT14 (NUDT14).